The chain runs to 782 residues: Zinc finger Y-chromosomal protein 1 (782 aa).

Disordered regions lie at residues 211–233 (ADLEGSSEVTMNAESGTDSSKLD) and 360–386 (LNQDESGGLDRVPKQKSKKKKRPESKQ). Positions 217 to 229 (SEVTMNAESGTDS) are enriched in polar residues. A Nuclear localization signal motif is present at residues 372-382 (PKQKSKKKKRP). Over residues 373 to 382 (KQKSKKKKRP) the composition is skewed to basic residues. 13 C2H2-type zinc fingers span residues 403–425 (YPCMFCGKKFKTKRFLKRHTKNH), 434–456 (YHCTECDYSTNKKISLHNHMESH), 466–488 (TECDDCRKNLSHAGTLCTHKTMH), 497–520 (CKCKFCDYETAEQTLLNHHLLVVH), 526–548 (HICGECGKGFRHPSALKKHIRVH), 554–577 (YECQYCEYKSADSSNLKTHIKSKH), 583–605 (LKCGICLLTFSDNKEAQQHAVLH), 611–634 (HQCSHCNHKSSNSSDLKRHIISVH), 640–662 (HKCDMCSKGFHRPSELKKHVATH), 668–691 (HQCRHCDFNSPDPFLLSHHILSAH), 697–719 (FKCKRCKKEFQQQCELQTHMKTH), 725–748 (YQCEYCEYSTKDASGFKRHVISIH), and 754–777 (HSCDFCKKGFRRPSEKNQHIMRHH).

This sequence belongs to the krueppel C2H2-type zinc-finger protein family. ZFX/ZFY subfamily.

The protein resides in the nucleus. Functionally, probable transcriptional activator. Binds to the consensus sequence 5'-AGGCCY-3'. The protein is Zinc finger Y-chromosomal protein 1 (Zfy1) of Mus musculus (Mouse).